The primary structure comprises 242 residues: Small ribosomal subunit protein eS1 (242 aa).

This sequence belongs to the eukaryotic ribosomal protein eS1 family. As to quaternary structure, component of the small ribosomal subunit. Mature ribosomes consist of a small (40S) and a large (60S) subunit. The 40S subunit contains about 33 different proteins and 1 molecule of RNA (18S). The 60S subunit contains about 49 different proteins and 3 molecules of RNA (25S, 5.8S and 5S).

It localises to the cytoplasm. The sequence is that of Small ribosomal subunit protein eS1 from Lodderomyces elongisporus (strain ATCC 11503 / CBS 2605 / JCM 1781 / NBRC 1676 / NRRL YB-4239) (Yeast).